The sequence spans 894 residues: Glutamate receptor 3 (894 aa).

The N-terminal stretch at 1-28 (MARQKKMGQNVLRAVFFLVLGLLGHSHG) is a signal peptide. The Extracellular segment spans residues 29–552 (GFPNTISIGG…GVFSFLDPLA (524 aa)). 5 N-linked (GlcNAc...) asparagine glycosylation sites follow: Asn63, Asn266, Asn380, Asn415, and Asn422. Cys91 and Cys340 are oxidised to a cystine. Residues Pro508, Thr510, and Arg515 each contribute to the L-glutamate site. A helical membrane pass occupies residues 553–573 (YEIWMCIVFASIGVSVVLFLV). Over 574-602 (SRFSPYEWHLEDNNEEPRDPQSPPDPPNE) the chain is Cytoplasmic. Residues 603 to 618 (FGIFNSLWFSLGAFMQ) constitute an intramembrane region (helical; Pore-forming). An intramembrane segment occupies 619 to 621 (QGC). A lipid anchor (S-palmitoyl cysteine) is attached at Cys621. At 622–627 (DISPRS) the chain is on the cytoplasmic side. The helical transmembrane segment at 628-648 (LSGRIVGGVWWFFTLIIISSY) threads the bilayer. Residues 649–823 (TANLAAFLTV…DKTSALSLSN (175 aa)) lie on the Extracellular side of the membrane. Ser686, Thr687, and Glu737 together coordinate L-glutamate. A disulfide bridge links Cys750 with Cys805. The chain crosses the membrane as a helical span at residues 824–844 (VAGVFYILVGGLGLAMMVALI). Residues 845–894 (EFCYKSRAESKRMKLTKNTQNFKPAPATNTQNYATYREGYNVYGTESVKI) are Cytoplasmic-facing. Cys847 carries S-palmitoyl cysteine lipidation. Residues Tyr877 and Tyr887 each carry the phosphotyrosine modification.

It belongs to the glutamate-gated ion channel (TC 1.A.10.1) family. GRIA3 subfamily. As to quaternary structure, homotetramer or heterotetramer of pore-forming glutamate receptor subunits. Tetramers may be formed by the dimerization of dimers. Interacts with PICK1, GRIP1 and GRIP2. Found in a complex with GRIA1, GRIA2, GRIA4, CNIH2, CNIH3, CACNG2, CACNG3, CACNG4, CACNG5, CACNG7 and CACNG8. Interacts with CACNG5. Found in a complex with GRIA1, GRIA2, GRIA4, DLG4, CACNG8 and CNIH2.

The protein localises to the cell membrane. It is found in the postsynaptic cell membrane. Its subcellular location is the postsynaptic density membrane. The catalysed reaction is Ca(2+)(in) = Ca(2+)(out). In terms of biological role, ionotropic glutamate receptor that functions as a ligand-gated cation channel, gated by L-glutamate and glutamatergic agonists such as alpha-amino-3-hydroxy-5-methyl-4-isoxazolepropionic acid (AMPA), quisqualic acid, and kainic acid. L-glutamate acts as an excitatory neurotransmitter at many synapses in the central nervous system and plays an important role in fast excitatory synaptic transmission by inducing long-term potentiation. Binding of the excitatory neurotransmitter L-glutamate induces a conformation change, leading to the opening of the cation channel, and thereby converts the chemical signal to an electrical impulse upon entry of calcium. The receptor then desensitizes rapidly and enters a transient inactive state, characterized by the presence of bound agonist. In the presence of CACNG8, shows resensitization which is characterized by a delayed accumulation of current flux upon continued application of glutamate. The protein is Glutamate receptor 3 of Macaca fascicularis (Crab-eating macaque).